A 605-amino-acid chain; its full sequence is Probable potassium transport system protein Kup (605 aa).

Helical transmembrane passes span 17-37 (GLVF…IFAL), 45-65 (VFGI…VEYA), 96-116 (IAFV…DGVI), 140-160 (LGTL…FQFK), 165-185 (VAAA…VSGL), 211-231 (GISA…GEAL), 246-266 (AWYF…AFAL), 286-306 (LYIP…QALI), 338-358 (IYIG…MLIF), 367-387 (AYGL…TIIF), 394-414 (WKVP…ISNL), and 417-437 (LPHG…TILI).

This sequence belongs to the HAK/KUP transporter (TC 2.A.72) family.

Its subcellular location is the cell inner membrane. The catalysed reaction is K(+)(in) + H(+)(in) = K(+)(out) + H(+)(out). In terms of biological role, transport of potassium into the cell. Likely operates as a K(+):H(+) symporter. The protein is Probable potassium transport system protein Kup of Geotalea uraniireducens (strain Rf4) (Geobacter uraniireducens).